The primary structure comprises 339 residues: Dihydroorotate dehydrogenase (quinone) (339 aa).

FMN-binding positions include 62-66 (AGMDK) and T86. K66 is a substrate binding site. Position 111 to 115 (111 to 115 (NRMGF)) interacts with substrate. 2 residues coordinate FMN: N139 and N172. N172 serves as a coordination point for substrate. S175 serves as the catalytic Nucleophile. Residue N177 coordinates substrate. The FMN site is built by K217 and T245. 246 to 247 (NT) contacts substrate. FMN contacts are provided by residues G268, G297, and 318 to 319 (YS).

The protein belongs to the dihydroorotate dehydrogenase family. Type 2 subfamily. As to quaternary structure, monomer. It depends on FMN as a cofactor.

The protein resides in the cell membrane. The catalysed reaction is (S)-dihydroorotate + a quinone = orotate + a quinol. It functions in the pathway pyrimidine metabolism; UMP biosynthesis via de novo pathway; orotate from (S)-dihydroorotate (quinone route): step 1/1. Its function is as follows. Catalyzes the conversion of dihydroorotate to orotate with quinone as electron acceptor. This is Dihydroorotate dehydrogenase (quinone) from Shewanella baltica (strain OS185).